A 549-amino-acid chain; its full sequence is Chaperonin GroEL (549 aa).

Residues threonine 30 to proline 33, lysine 51, aspartate 87 to threonine 91, glycine 415, and aspartate 496 each bind ATP.

This sequence belongs to the chaperonin (HSP60) family. In terms of assembly, forms a cylinder of 14 subunits composed of two heptameric rings stacked back-to-back. Interacts with the co-chaperonin GroES.

The protein localises to the cytoplasm. The catalysed reaction is ATP + H2O + a folded polypeptide = ADP + phosphate + an unfolded polypeptide.. Functionally, together with its co-chaperonin GroES, plays an essential role in assisting protein folding. The GroEL-GroES system forms a nano-cage that allows encapsulation of the non-native substrate proteins and provides a physical environment optimized to promote and accelerate protein folding. The polypeptide is Chaperonin GroEL (Prosthecochloris aestuarii (strain DSM 271 / SK 413)).